Reading from the N-terminus, the 235-residue chain is Succinate dehydrogenase iron-sulfur subunit (235 aa).

Residues cysteine 53, cysteine 58, and cysteine 73 each coordinate [2Fe-2S] cluster. Residues 133–163 (ERAKLDGLYECILCACCSSSCPSYWWNPDKF) form the 4Fe-4S ferredoxin-type domain. [4Fe-4S] cluster is bound by residues cysteine 143, cysteine 146, and cysteine 149. Cysteine 153 serves as a coordination point for [3Fe-4S] cluster. Tryptophan 158 is an a ubiquinone binding site. Residues cysteine 200 and cysteine 206 each contribute to the [3Fe-4S] cluster site. Position 210 (cysteine 210) interacts with [4Fe-4S] cluster.

Belongs to the succinate dehydrogenase/fumarate reductase iron-sulfur protein family. In terms of assembly, part of an enzyme complex containing four subunits: a flavoprotein, an iron-sulfur protein, cytochrome b-556 and a hydrophobic protein. It depends on [2Fe-2S] cluster as a cofactor. The cofactor is [3Fe-4S] cluster. [4Fe-4S] cluster is required as a cofactor.

The enzyme catalyses a quinone + succinate = fumarate + a quinol. It functions in the pathway carbohydrate metabolism; tricarboxylic acid cycle; fumarate from succinate (bacterial route): step 1/1. This chain is Succinate dehydrogenase iron-sulfur subunit (sdhB), found in Coxiella burnetii (strain RSA 493 / Nine Mile phase I).